The sequence spans 450 residues: Probable ECA polymerase (450 aa).

Transmembrane regions (helical) follow at residues 6-26, 37-57, 63-83, 120-140, 155-175, 181-201, 207-227, 228-248, 341-361, 378-398, and 410-430; these read FSGLLVVWLLSTLFIATLTWF, VFFSLLFLLTFFFGFPLTSVL, VGVAPPEILLQALLSAACFYA, LMGIALVSVGIFFMHNGFLLF, GVALKRFFYFFIPAMLVIYFL, AWLFFLVSTVAFGLLTYMIVG, IIIAFAIFLFIGIIRGWISLW, MLVAAGVLGIVGMFWLALKRY, LVVMGGALFIPLGAVAVGLII, YKAAILHSFCFGAIFNMIVLA, and VFFLVIFGACLLVAKLLFWLF.

It belongs to the WzyE family. As to quaternary structure, probably part of a complex composed of WzxE, WzyE and WzzE.

Its subcellular location is the cell inner membrane. It participates in bacterial outer membrane biogenesis; enterobacterial common antigen biosynthesis. Its function is as follows. Probably involved in the polymerization of enterobacterial common antigen (ECA) trisaccharide repeat units. This chain is Probable ECA polymerase, found in Citrobacter koseri (strain ATCC BAA-895 / CDC 4225-83 / SGSC4696).